Consider the following 428-residue polypeptide: Dihydrolipoyllysine-residue acetyltransferase component of pyruvate dehydrogenase complex (428 aa).

Positions 2–77 (AFEFKLPDIG…TVGQTLITLD (76 aa)) constitute a Lipoyl-binding domain. K43 carries the post-translational modification N6-lipoyllysine. The disordered stretch occupies residues 88-123 (GQEQEEAKKEEKTETVSKEEKVDAVAPNAPAAEAEA). A compositionally biased stretch (basic and acidic residues) spans 89–110 (QEQEEAKKEEKTETVSKEEKVD). Positions 111–123 (AVAPNAPAAEAEA) are enriched in low complexity. The region spanning 130 to 167 (IAMPSVRKYAREKGVDIRLVQGTGKNGRVLKEDIDAFL) is the Peripheral subunit-binding (PSBD) domain. Positions 177–194 (AAEEKAAPAAAKPATTEG) are enriched in low complexity. The disordered stretch occupies residues 177-201 (AAEEKAAPAAAKPATTEGEFPETRE). H399 is an active-site residue.

The protein belongs to the 2-oxoacid dehydrogenase family. Forms a 60-polypeptide structural core with icosahedral symmetry. (R)-lipoate serves as cofactor.

It catalyses the reaction N(6)-[(R)-dihydrolipoyl]-L-lysyl-[protein] + acetyl-CoA = N(6)-[(R)-S(8)-acetyldihydrolipoyl]-L-lysyl-[protein] + CoA. Functionally, the pyruvate dehydrogenase complex catalyzes the overall conversion of pyruvate to acetyl-CoA and CO(2). It contains multiple copies of three enzymatic components: pyruvate dehydrogenase (E1), dihydrolipoamide acetyltransferase (E2) and lipoamide dehydrogenase (E3). This is Dihydrolipoyllysine-residue acetyltransferase component of pyruvate dehydrogenase complex (pdhC) from Geobacillus stearothermophilus (Bacillus stearothermophilus).